Here is a 228-residue protein sequence, read N- to C-terminus: Protein GrpE (228 aa).

Disordered stretches follow at residues 1-31 and 209-228; these read MADE…NRAA and GVSK…EGNG.

The protein belongs to the GrpE family. In terms of assembly, homodimer.

It localises to the cytoplasm. Its function is as follows. Participates actively in the response to hyperosmotic and heat shock by preventing the aggregation of stress-denatured proteins, in association with DnaK and GrpE. It is the nucleotide exchange factor for DnaK and may function as a thermosensor. Unfolded proteins bind initially to DnaJ; upon interaction with the DnaJ-bound protein, DnaK hydrolyzes its bound ATP, resulting in the formation of a stable complex. GrpE releases ADP from DnaK; ATP binding to DnaK triggers the release of the substrate protein, thus completing the reaction cycle. Several rounds of ATP-dependent interactions between DnaJ, DnaK and GrpE are required for fully efficient folding. The polypeptide is Protein GrpE (Brucella anthropi (strain ATCC 49188 / DSM 6882 / CCUG 24695 / JCM 21032 / LMG 3331 / NBRC 15819 / NCTC 12168 / Alc 37) (Ochrobactrum anthropi)).